The sequence spans 152 residues: D-aminoacyl-tRNA deacylase (152 aa).

Positions 142–143 (GP) match the Gly-cisPro motif, important for rejection of L-amino acids motif.

Belongs to the DTD family. Homodimer.

It localises to the cytoplasm. It catalyses the reaction glycyl-tRNA(Ala) + H2O = tRNA(Ala) + glycine + H(+). The catalysed reaction is a D-aminoacyl-tRNA + H2O = a tRNA + a D-alpha-amino acid + H(+). Functionally, an aminoacyl-tRNA editing enzyme that deacylates mischarged D-aminoacyl-tRNAs. Also deacylates mischarged glycyl-tRNA(Ala), protecting cells against glycine mischarging by AlaRS. Acts via tRNA-based rather than protein-based catalysis; rejects L-amino acids rather than detecting D-amino acids in the active site. By recycling D-aminoacyl-tRNA to D-amino acids and free tRNA molecules, this enzyme counteracts the toxicity associated with the formation of D-aminoacyl-tRNA entities in vivo and helps enforce protein L-homochirality. The chain is D-aminoacyl-tRNA deacylase from Burkholderia multivorans (strain ATCC 17616 / 249).